Consider the following 1380-residue polypeptide: DNA-directed RNA polymerase subunit beta (1380 aa).

The protein belongs to the RNA polymerase beta chain family. The RNAP catalytic core consists of 2 alpha, 1 beta, 1 beta' and 1 omega subunit. When a sigma factor is associated with the core the holoenzyme is formed, which can initiate transcription.

The enzyme catalyses RNA(n) + a ribonucleoside 5'-triphosphate = RNA(n+1) + diphosphate. In terms of biological role, DNA-dependent RNA polymerase catalyzes the transcription of DNA into RNA using the four ribonucleoside triphosphates as substrates. This Sinorhizobium medicae (strain WSM419) (Ensifer medicae) protein is DNA-directed RNA polymerase subunit beta.